A 784-amino-acid polypeptide reads, in one-letter code: Protein-tyrosine-phosphatase MKP1 (784 aa).

Disordered regions lie at residues 1–73 and 94–118; these read MVGR…NSKA and PKAGSDDVGEWPHPPTPSGNKTGER. Residues 22–34 are compositionally biased toward low complexity; that stretch reads WRSASWSASRTAS. Threonine 64 and threonine 109 each carry phosphothreonine. In terms of domain architecture, Tyrosine-protein phosphatase spans 149–291; that stretch reads ECSKVADHIY…LLQCQKRVHA (143 aa). Cysteine 235 serves as the catalytic Phosphocysteine intermediate. Residue 235–241 participates in substrate binding; that stretch reads CCQGVSR. Residues 488 to 586 form a disordered region; sequence HSSGSPSSTT…ASPSLAERRG (99 aa). Composition is skewed to low complexity over residues 489 to 510 and 521 to 553; these read SSGSPSSTTSSSSTASPPFLSP and SLKSFSQSSGRSSLRPSIPPSLTLPKFSSLSLL. Positions 554–577 are enriched in polar residues; the sequence is PSQTSPKESRGVNTFLQPSPNRKA. Phosphoserine occurs at positions 558 and 572.

Interacts with MPK6. May interact with MPK3 and MPK4. Post-translationally, phosphorylated on threonine and serine residues by MPK6.

It is found in the cytoplasm. It localises to the cytosol. The catalysed reaction is O-phospho-L-tyrosyl-[protein] + H2O = L-tyrosyl-[protein] + phosphate. Functionally, protein-tyrosine-phosphatase that acts as a negative regulator of MPK6 and MPK3 signaling by dephosphorylating and repressing MPK6 and MPK3. Modulates defense response by repressing salicylic acid (SA) production, camalexin biosynthesis and SNC1-mediated responses. Acts as a negative regulator of MPK6-mediated pathogen-associated molecular pattern (PAMP) responses, including MPK6 and MPK3 activation, accumulation of extracellular reactive oxygen species and inhibition of seedling growth. Involved in UV-B stress tolerance. May be involved in salt and genotoxic stress responses. This Arabidopsis thaliana (Mouse-ear cress) protein is Protein-tyrosine-phosphatase MKP1 (MKP1).